Here is a 185-residue protein sequence, read N- to C-terminus: Orotate phosphoribosyltransferase (185 aa).

5-phospho-alpha-D-ribose 1-diphosphate-binding positions include Arg98, Lys99, Lys102, His104, and Glu128–Ser136. Orotate is bound by residues Thr132 and Arg160.

This sequence belongs to the purine/pyrimidine phosphoribosyltransferase family. PyrE subfamily. As to quaternary structure, homodimer. Mg(2+) serves as cofactor.

The enzyme catalyses orotidine 5'-phosphate + diphosphate = orotate + 5-phospho-alpha-D-ribose 1-diphosphate. The protein operates within pyrimidine metabolism; UMP biosynthesis via de novo pathway; UMP from orotate: step 1/2. Functionally, catalyzes the transfer of a ribosyl phosphate group from 5-phosphoribose 1-diphosphate to orotate, leading to the formation of orotidine monophosphate (OMP). The protein is Orotate phosphoribosyltransferase of Bradyrhizobium sp. (strain BTAi1 / ATCC BAA-1182).